The sequence spans 76 residues: uncharacterized protein (76 aa).

This is an uncharacterized protein from Magallana gigas (Pacific oyster).